The following is a 461-amino-acid chain: Epidermin leader peptide-processing serine protease EpiP (461 aa).

The N-terminal stretch at 1-23 (MNKFKFFIVFLILSLVFLQNEYA) is a signal peptide. Residues 121–459 (QWDMRKITNE…NGKLDVYKLL (339 aa)) form the Peptidase S8 domain. Residues Asp149, His194, and Ser402 each act as charge relay system in the active site.

The protein belongs to the peptidase S8 family.

It participates in antibiotic biosynthesis; epidermin biosynthesis. In terms of biological role, protease which cleaves the matured lantibiotic from the modified prepeptide. This is Epidermin leader peptide-processing serine protease EpiP (epiP) from Staphylococcus epidermidis.